Reading from the N-terminus, the 95-residue chain is Small ribosomal subunit protein bS20c (95 aa).

Residues 76–95 (NGSAKKAKLTKRLKEKKISL) are disordered. Residues 80–95 (KKAKLTKRLKEKKISL) are compositionally biased toward basic residues.

This sequence belongs to the bacterial ribosomal protein bS20 family.

Its subcellular location is the plastid. It is found in the chloroplast. In terms of biological role, binds directly to 16S ribosomal RNA. The polypeptide is Small ribosomal subunit protein bS20c (Guillardia theta (Cryptophyte)).